The sequence spans 850 residues: Translation initiation factor IF-2 (850 aa).

2 disordered regions span residues 50 to 72 (LKSS…KTTS) and 92 to 267 (FVQR…TGPV). The segment covering 96-135 (SPEEIQAEQKREQEERRAAENAAREKADADARQRNEEQAR) has biased composition (basic and acidic residues). A compositionally biased stretch (low complexity) spans 136 to 172 (RQAAQAPAAAPVAKAEPAPAAAAPAAPAVPDAPVSED). Basic and acidic residues-rich tracts occupy residues 173-210 (AAAR…RGEA) and 234-243 (TTDEESDGFR). Basic residues predominate over residues 244–257 (RGRGGKGKPKKRNQ). One can recognise a tr-type G domain in the interval 350–517 (SRAPVVTVMG…AVLLQAEILE (168 aa)). The segment at 359 to 366 (GHVDHGKT) is G1. 359 to 366 (GHVDHGKT) lines the GTP pocket. Residues 384–388 (GITQH) form a G2 region. Positions 405–408 (DTPG) are G3. Residues 405 to 409 (DTPGH) and 459 to 462 (NKID) each bind GTP. Residues 459-462 (NKID) form a G4 region. Residues 495–497 (SAK) form a G5 region.

Belongs to the TRAFAC class translation factor GTPase superfamily. Classic translation factor GTPase family. IF-2 subfamily.

The protein resides in the cytoplasm. Functionally, one of the essential components for the initiation of protein synthesis. Protects formylmethionyl-tRNA from spontaneous hydrolysis and promotes its binding to the 30S ribosomal subunits. Also involved in the hydrolysis of GTP during the formation of the 70S ribosomal complex. This Pseudomonas entomophila (strain L48) protein is Translation initiation factor IF-2.